A 424-amino-acid chain; its full sequence is Serine--tRNA ligase (424 aa).

L-serine is bound at residue 230-232 (TAE). 261–263 (RSE) contributes to the ATP binding site. Glu284 contributes to the L-serine binding site. 348–351 (EISS) serves as a coordination point for ATP. Residue Ser384 coordinates L-serine.

Belongs to the class-II aminoacyl-tRNA synthetase family. Type-1 seryl-tRNA synthetase subfamily. As to quaternary structure, homodimer. The tRNA molecule binds across the dimer.

The protein localises to the cytoplasm. It catalyses the reaction tRNA(Ser) + L-serine + ATP = L-seryl-tRNA(Ser) + AMP + diphosphate + H(+). The enzyme catalyses tRNA(Sec) + L-serine + ATP = L-seryl-tRNA(Sec) + AMP + diphosphate + H(+). It participates in aminoacyl-tRNA biosynthesis; selenocysteinyl-tRNA(Sec) biosynthesis; L-seryl-tRNA(Sec) from L-serine and tRNA(Sec): step 1/1. Its function is as follows. Catalyzes the attachment of serine to tRNA(Ser). Is also able to aminoacylate tRNA(Sec) with serine, to form the misacylated tRNA L-seryl-tRNA(Sec), which will be further converted into selenocysteinyl-tRNA(Sec). In Streptococcus pneumoniae serotype 4 (strain ATCC BAA-334 / TIGR4), this protein is Serine--tRNA ligase.